The following is a 117-amino-acid chain: Large ribosomal subunit protein bL20 (117 aa).

This sequence belongs to the bacterial ribosomal protein bL20 family.

In terms of biological role, binds directly to 23S ribosomal RNA and is necessary for the in vitro assembly process of the 50S ribosomal subunit. It is not involved in the protein synthesizing functions of that subunit. The sequence is that of Large ribosomal subunit protein bL20 from Glaesserella parasuis serovar 5 (strain SH0165) (Haemophilus parasuis).